The following is a 112-amino-acid chain: Nitrogen regulatory protein GlnK2 (112 aa).

Residues threonine 29, 37-39 (GVQ), valine 64, and 87-90 (GDGK) each bind ADP. Residues threonine 29, 37-39 (GVQ), valine 64, and 87-90 (GDGK) contribute to the ATP site.

The protein belongs to the P(II) protein family. Homotrimer. Interacts and forms a complex with Amt2.

Its subcellular location is the cytoplasm. Its function is as follows. Involved in the regulation of nitrogen metabolism. Regulates the activity of its targets by protein-protein interaction in response to the nitrogen status of the cell. Regulates the activity of the ammonia channel Amt2 via direct interaction. This chain is Nitrogen regulatory protein GlnK2, found in Methanocaldococcus jannaschii (strain ATCC 43067 / DSM 2661 / JAL-1 / JCM 10045 / NBRC 100440) (Methanococcus jannaschii).